Reading from the N-terminus, the 366-residue chain is Small ribosomal subunit biogenesis GTPase RsgA (366 aa).

A CP-type G domain is found at 107–266 (RSEGQILAAN…LIDTPGLRGV (160 aa)). GTP contacts are provided by residues 154–157 (TKAD) and 208–216 (GQSGAGKST). Positions 289, 294, 296, and 302 each coordinate Zn(2+).

The protein belongs to the TRAFAC class YlqF/YawG GTPase family. RsgA subfamily. Monomer. Associates with 30S ribosomal subunit, binds 16S rRNA. Zn(2+) serves as cofactor.

It localises to the cytoplasm. One of several proteins that assist in the late maturation steps of the functional core of the 30S ribosomal subunit. Helps release RbfA from mature subunits. May play a role in the assembly of ribosomal proteins into the subunit. Circularly permuted GTPase that catalyzes slow GTP hydrolysis, GTPase activity is stimulated by the 30S ribosomal subunit. The polypeptide is Small ribosomal subunit biogenesis GTPase RsgA (Streptomyces coelicolor (strain ATCC BAA-471 / A3(2) / M145)).